The primary structure comprises 118 residues: Co-chaperonin GroES (118 aa).

This sequence belongs to the GroES chaperonin family. Heptamer of 7 subunits arranged in a ring. Interacts with the chaperonin GroEL.

The protein resides in the cytoplasm. Functionally, together with the chaperonin GroEL, plays an essential role in assisting protein folding. The GroEL-GroES system forms a nano-cage that allows encapsulation of the non-native substrate proteins and provides a physical environment optimized to promote and accelerate protein folding. GroES binds to the apical surface of the GroEL ring, thereby capping the opening of the GroEL channel. In Helicobacter acinonychis (strain Sheeba), this protein is Co-chaperonin GroES.